Consider the following 328-residue polypeptide: 2,3-diketo-L-gulonate-binding periplasmic protein YiaO (328 aa).

Positions 1–24 (MKLRSVTYALFIAGLAAFSTSSLA) are cleaved as a signal peptide.

In terms of assembly, the complex comprises the extracytoplasmic solute receptor protein YiaO, and the two transmembrane proteins YiaM and YiaN.

It localises to the periplasm. In terms of biological role, part of the tripartite ATP-independent periplasmic (TRAP) transport system YiaMNO involved in the uptake of 2,3-diketo-L-gulonate. This protein specifically binds 2,3-diketo-L-gulonate. Is not able to bind either L-ascorbate or dehydroascorbate. The sequence is that of 2,3-diketo-L-gulonate-binding periplasmic protein YiaO (yiaO) from Escherichia coli (strain K12).